The primary structure comprises 87 residues: Small ribosomal subunit protein bS20 (87 aa).

The segment at 1-26 is disordered; it reads MANTAQAKKRVRQNIKQRERNSGLRS.

Belongs to the bacterial ribosomal protein bS20 family.

Functionally, binds directly to 16S ribosomal RNA. This Nitrosomonas eutropha (strain DSM 101675 / C91 / Nm57) protein is Small ribosomal subunit protein bS20.